A 412-amino-acid polypeptide reads, in one-letter code: Zinc finger protein 821 (412 aa).

A disordered region spans residues 26–83; sequence RQAMMKTDFPGDLGSQRQAIQQLRDQDSSSSDSEGDEEETTQDEVSSHTSEEDGGVVK. The segment covering 58 to 67 has biased composition (acidic residues); sequence SEGDEEETTQ. 2 C2H2-type zinc fingers span residues 116–140 and 150–172; these read GLCQCPLCQLDCGSREQLIAHVYQH and YMCPVCGRALSSPGSLGRHLLIH. A coiled-coil region spans residues 257-366; that stretch reads KWALRRQNEP…EKMDMMLRAQ (110 aa). The interval 278–319 is disordered; the sequence is RTAKKSRRDNETPEEREVRRMRDREAKRLQRMQETDEQRARR.

It belongs to the krueppel C2H2-type zinc-finger protein family.

The protein localises to the nucleus. Its function is as follows. May be involved in transcriptional regulation. The chain is Zinc finger protein 821 (ZNF821) from Bos taurus (Bovine).